A 474-amino-acid polypeptide reads, in one-letter code: Ribosomal RNA small subunit methyltransferase F (474 aa).

Residues 119–125 (AAAPGSK), glutamate 143, aspartate 170, and aspartate 188 contribute to the S-adenosyl-L-methionine site. The Nucleophile role is filled by cysteine 241.

Belongs to the class I-like SAM-binding methyltransferase superfamily. RsmB/NOP family.

The protein resides in the cytoplasm. The enzyme catalyses cytidine(1407) in 16S rRNA + S-adenosyl-L-methionine = 5-methylcytidine(1407) in 16S rRNA + S-adenosyl-L-homocysteine + H(+). Specifically methylates the cytosine at position 1407 (m5C1407) of 16S rRNA. In Shewanella oneidensis (strain ATCC 700550 / JCM 31522 / CIP 106686 / LMG 19005 / NCIMB 14063 / MR-1), this protein is Ribosomal RNA small subunit methyltransferase F.